The primary structure comprises 1135 residues: Large proline-rich protein bag6-A (1135 aa).

One can recognise a Ubiquitin-like domain in the interval 7–82; it reads MEVTVKTLDS…HLVERAPPQT (76 aa). Disordered stretches follow at residues 76 to 114, 194 to 238, 350 to 407, 498 to 522, 552 to 612, 661 to 698, 1075 to 1099, and 1116 to 1135; these read ERAP…RNGN, EQAA…SPSE, TGNG…PHPR, SFQF…VPGA, QGGS…QHLS, PVST…ESLP, KATG…EAQG, and NESY…RGDP. Residues 79-100 show a composition bias toward low complexity; sequence PPQTQPSTGGPSTSSSTSPTSS. A compositionally biased stretch (polar residues) spans 212–227; the sequence is RETLPQTTQNTDGQSN. Low complexity predominate over residues 228–237; the sequence is TTPTSHPSPS. Over residues 367–387 the composition is skewed to polar residues; it reads QPPSTNTSEPQRPNTENQPPS. Low complexity-rich tracts occupy residues 555-600 and 663-672; these read SSTS…SVPS and STAPTQSASQ. Positions 673 to 692 are enriched in pro residues; sequence APPPSSPPPPPAHSSPPPAA. Residues 1087–1099 show a composition bias toward basic and acidic residues; sequence CVRRELDNSEAQG. Residues 1116-1129 are compositionally biased toward polar residues; it reads NESYSAQRFPNTQR.

In terms of assembly, component of the bag6/bat3 complex.

The protein localises to the cytoplasm. It is found in the cytosol. It localises to the nucleus. The protein resides in the secreted. Its subcellular location is the extracellular exosome. Functionally, ATP-independent molecular chaperone preventing the aggregation of misfolded and hydrophobic patches-containing proteins. Functions as part of a cytosolic protein quality control complex, the bag6/bat3 complex, which maintains these client proteins in a soluble state and participates in their proper delivery to the endoplasmic reticulum or alternatively can promote their sorting to the proteasome where they undergo degradation. The bag6/bat3 complex is involved in the post-translational delivery of tail-anchored/type II transmembrane proteins to the endoplasmic reticulum membrane. Similarly, the bag6/bat3 complex also functions as a sorting platform for proteins of the secretory pathway that are mislocalized to the cytosol either delivering them to the proteasome for degradation or to the endoplasmic reticulum. The bag6/bat3 complex also plays a role in the endoplasmic reticulum-associated degradation (ERAD), a quality control mechanism that eliminates unwanted proteins of the endoplasmic reticulum through their retrotranslocation to the cytosol and their targeting to the proteasome. It maintains these retrotranslocated proteins in an unfolded yet soluble state condition in the cytosol to ensure their proper delivery to the proteasome. Also required for selective ubiquitin-mediated degradation of defective nascent chain polypeptides by the proteasome. Also involved in endoplasmic reticulum stress-induced pre-emptive quality control, a mechanism that selectively attenuates the translocation of newly synthesized proteins into the endoplasmic reticulum and reroutes them to the cytosol for proteasomal degradation. May ensure the proper degradation of these proteins and thereby protects the endoplasmic reticulum from protein overload upon stress. By stabilizing a large spectrum of proteins, may indirectly affect different biological processes including apoptosis. By controlling the steady-state expression of the IGF1R receptor, indirectly regulates the insulin-like growth factor receptor signaling pathway. Its function is as follows. When nuclear, may also act as a component of some chromatin regulator complex. This is Large proline-rich protein bag6-A from Xenopus laevis (African clawed frog).